The chain runs to 709 residues: Phosphoprotein (709 aa).

Residues 1-35 are N0 binding; it reads MDKLELVNDGLNIIDFIQKNQKEIQKTYGRSSIQQ. Positions 53–92 are disordered; sequence SGESEQVEGGMSKDDGDVERRNLEDLSSTSPTDGTIGKRV. Residues 63–76 are compositionally biased toward basic and acidic residues; it reads MSKDDGDVERRNLE. Positions 110-140 are interaction with host STAT1; that stretch reads VVTDVVYHDHGGECTGYGFTSSPERGWSDYT. Ser257 is modified (phosphoserine; by host). The segment at 265–324 is disordered; it reads ISPEDEEPSSVGGKPNESIGRTIEGQSIRDNLQAKDNKSTDVPGAGPKDSAVKEEPPQKR. Ser350 carries the phosphoserine; by host modification. The disordered stretch occupies residues 384 to 473; the sequence is VQTADRQRPG…VNPVDDNDSL (90 aa). 2 stretches are compositionally biased toward polar residues: residues 416 to 426 and 444 to 456; these read GTENVPGSKSG and NAENVQLNASTAV. The segment at 475-580 is multimerization; that stretch reads DKYIMPSDDF…LVSMMIMIPG (106 aa).

Homotetramer. Interacts (via multimerization domain) with polymerase L; this interaction forms the polymerase L-P complex. Interacts (via N-terminus) with N0 (via Ncore); this interaction allows P to chaperon N0 to avoid N polymerization before encapsidation. Interacts (via C-terminus) with N-RNA template (via C-terminus); this interaction positions the polymerase on the template for both transcription and replication. Interacts with host STAT1.

It is found in the virion. Its subcellular location is the host cytoplasm. Its function is as follows. Essential cofactor of the RNA polymerase L that plays a central role in the transcription and replication by forming the polymerase complex with RNA polymerase L and recruiting L to the genomic N-RNA template for RNA synthesis. Also plays a central role in the encapsidation of nascent RNA chains by forming the encapsidation complex with the nucleocapsid protein N (N-P complex). Acts as a chaperone for newly synthesized free N protein, so-called N0, allowing encapsidation of nascent RNA chains during replication. The nucleoprotein protein N prevents excessive phosphorylation of P, which leads to down-regulation of viral transcription/ replication. Participates, together with N, in the formation of viral factories (viroplasms), which are large inclusions in the host cytoplasm where replication takes place. In Nipah virus, this protein is Phosphoprotein (P/V/C).